Reading from the N-terminus, the 447-residue chain is UDP-N-acetylglucosamine 1-carboxyvinyltransferase (447 aa).

Residue 27–28 coordinates phosphoenolpyruvate; sequence KN. R97 contributes to the UDP-N-acetyl-alpha-D-glucosamine binding site. C121 (proton donor) is an active-site residue. C121 bears the 2-(S-cysteinyl)pyruvic acid O-phosphothioketal mark. UDP-N-acetyl-alpha-D-glucosamine-binding positions include 126 to 130, D314, and V336; that span reads RPVDL.

This sequence belongs to the EPSP synthase family. MurA subfamily.

Its subcellular location is the cytoplasm. The enzyme catalyses phosphoenolpyruvate + UDP-N-acetyl-alpha-D-glucosamine = UDP-N-acetyl-3-O-(1-carboxyvinyl)-alpha-D-glucosamine + phosphate. It participates in cell wall biogenesis; peptidoglycan biosynthesis. Its function is as follows. Cell wall formation. Adds enolpyruvyl to UDP-N-acetylglucosamine. The polypeptide is UDP-N-acetylglucosamine 1-carboxyvinyltransferase (Nostoc sp. (strain PCC 7120 / SAG 25.82 / UTEX 2576)).